Consider the following 490-residue polypeptide: Membrane-bound lytic murein transglycosylase F (490 aa).

The signal sequence occupies residues Met-1 to Ala-32. Residues Pro-33–Val-269 are non-LT domain. Residues Asp-270–Leu-490 are LT domain. Glu-316 is a catalytic residue. Positions Ala-467 to Leu-490 are disordered. Residues Thr-479–Leu-490 are compositionally biased toward basic and acidic residues.

It in the N-terminal section; belongs to the bacterial solute-binding protein 3 family. This sequence in the C-terminal section; belongs to the transglycosylase Slt family.

It is found in the cell outer membrane. It catalyses the reaction Exolytic cleavage of the (1-&gt;4)-beta-glycosidic linkage between N-acetylmuramic acid (MurNAc) and N-acetylglucosamine (GlcNAc) residues in peptidoglycan, from either the reducing or the non-reducing ends of the peptidoglycan chains, with concomitant formation of a 1,6-anhydrobond in the MurNAc residue.. Murein-degrading enzyme that degrades murein glycan strands and insoluble, high-molecular weight murein sacculi, with the concomitant formation of a 1,6-anhydromuramoyl product. Lytic transglycosylases (LTs) play an integral role in the metabolism of the peptidoglycan (PG) sacculus. Their lytic action creates space within the PG sacculus to allow for its expansion as well as for the insertion of various structures such as secretion systems and flagella. The protein is Membrane-bound lytic murein transglycosylase F of Pseudomonas aeruginosa (strain ATCC 15692 / DSM 22644 / CIP 104116 / JCM 14847 / LMG 12228 / 1C / PRS 101 / PAO1).